The following is a 107-amino-acid chain: Phosphoribosyl-ATP pyrophosphatase (107 aa).

It belongs to the PRA-PH family.

It is found in the cytoplasm. It carries out the reaction 1-(5-phospho-beta-D-ribosyl)-ATP + H2O = 1-(5-phospho-beta-D-ribosyl)-5'-AMP + diphosphate + H(+). The protein operates within amino-acid biosynthesis; L-histidine biosynthesis; L-histidine from 5-phospho-alpha-D-ribose 1-diphosphate: step 2/9. This Bacillus cytotoxicus (strain DSM 22905 / CIP 110041 / 391-98 / NVH 391-98) protein is Phosphoribosyl-ATP pyrophosphatase.